We begin with the raw amino-acid sequence, 490 residues long: Cytochrome P450 2C1 (490 aa).

Residue C435 coordinates heme.

Belongs to the cytochrome P450 family. Heme is required as a cofactor.

The protein resides in the endoplasmic reticulum membrane. Its subcellular location is the microsome membrane. The enzyme catalyses an organic molecule + reduced [NADPH--hemoprotein reductase] + O2 = an alcohol + oxidized [NADPH--hemoprotein reductase] + H2O + H(+). Its function is as follows. Cytochromes P450 are a group of heme-thiolate monooxygenases. In liver microsomes, this enzyme is involved in an NADPH-dependent electron transport pathway. It oxidizes a variety of structurally unrelated compounds, including steroids, fatty acids, and xenobiotics. In Oryctolagus cuniculus (Rabbit), this protein is Cytochrome P450 2C1 (CYP2C1).